Here is a 257-residue protein sequence, read N- to C-terminus: UPF0246 protein SO_3540 (257 aa).

This sequence belongs to the UPF0246 family.

The protein is UPF0246 protein SO_3540 of Shewanella oneidensis (strain ATCC 700550 / JCM 31522 / CIP 106686 / LMG 19005 / NCIMB 14063 / MR-1).